We begin with the raw amino-acid sequence, 453 residues long: Aminodeoxychorismate synthase component 1 (453 aa).

L-tryptophan is bound by residues S36, 43–46 (YSRF), and 240–242 (PFS). Catalysis depends on E258, which acts as the Proton donor. K274 acts as the N6-(4-deoxychorismate)-lysine intermediate in catalysis.

The protein belongs to the anthranilate synthase component I family. In terms of assembly, monomer. Heterodimer consisting of two non-identical subunits: a glutamine amidotransferase subunit (PabA) and a aminodeoxychorismate synthase subunit (PabB). Requires Mg(2+) as cofactor.

The catalysed reaction is chorismate + L-glutamine = 4-amino-4-deoxychorismate + L-glutamate. The protein operates within cofactor biosynthesis; tetrahydrofolate biosynthesis; 4-aminobenzoate from chorismate: step 1/2. Its activity is regulated as follows. Inhibited by 6-diazo-5-oxo-L-norleucine (DON). The inhibition is competitive with glutamine but uncompetitive with chorismate. Also inhibited by 2-fluorochorismate. Functionally, part of a heterodimeric complex that catalyzes the two-step biosynthesis of 4-amino-4-deoxychorismate (ADC), a precursor of p-aminobenzoate (PABA) and tetrahydrofolate. In the first step, a glutamine amidotransferase (PabA) generates ammonia as a substrate that, along with chorismate, is used in the second step, catalyzed by aminodeoxychorismate synthase (PabB) to produce ADC. PabB, in the absence of PabA, can catalyze the formation of ADC in the presence of exogenous ammonia. This chain is Aminodeoxychorismate synthase component 1 (pabB), found in Escherichia coli (strain K12).